Reading from the N-terminus, the 194-residue chain is Imidazoleglycerol-phosphate dehydratase (194 aa).

The protein belongs to the imidazoleglycerol-phosphate dehydratase family.

It localises to the cytoplasm. It catalyses the reaction D-erythro-1-(imidazol-4-yl)glycerol 3-phosphate = 3-(imidazol-4-yl)-2-oxopropyl phosphate + H2O. It functions in the pathway amino-acid biosynthesis; L-histidine biosynthesis; L-histidine from 5-phospho-alpha-D-ribose 1-diphosphate: step 6/9. The sequence is that of Imidazoleglycerol-phosphate dehydratase from Lacticaseibacillus paracasei (strain ATCC 334 / BCRC 17002 / CCUG 31169 / CIP 107868 / KCTC 3260 / NRRL B-441) (Lactobacillus paracasei).